The chain runs to 1664 residues: Peroxisome proliferator-activated receptor gamma coactivator-related protein 1 (1664 aa).

Disordered regions lie at residues 1 to 44 (MAAR…GTLG), 167 to 255 (LLTL…VASF), 436 to 555 (PVVP…EGPL), 681 to 701 (VDPV…VSSA), 735 to 793 (IESG…ADIP), 818 to 873 (CLVP…PTPP), and 1045 to 1068 (HGAP…HPKH). The span at 12–22 (APPPSGGPGPD) shows a compositional bias: pro residues. Residues 23–32 (PGGGARGSGW) are compositionally biased toward gly residues. The segment covering 201 to 224 (SLPDPSWDFSPPSFLETSSPKLPS) has biased composition (low complexity). Position 237 is a phosphoserine (Ser-237). Residues 433-467 (VVEPVVPKEPQNPPANAAPGSQRARKGRKKKSKEQ) are necessary for interaction with CREB1 and NRF1 and for transcriptional coactivation. The segment covering 455-464 (RARKGRKKKS) has biased composition (basic residues). Residues 482-499 (SSRGQSTVGTEVTSQVDN) show a composition bias toward polar residues. Low complexity predominate over residues 522–531 (RAWARAWAAA). Positions 533–549 (ENSSPKNLERSAGQSSP) are enriched in polar residues. 2 positions are modified to phosphoserine: Ser-536 and Ser-548. Residues 823–836 (GPSPASPSPEPPVS) show a composition bias toward pro residues. Positions 862 to 873 (VQSVSPAVPTPP) are enriched in low complexity. Ser-1076 carries the phosphoserine modification. Disordered stretches follow at residues 1093–1130 (EEPA…STVP), 1182–1209 (SEAK…DIPQ), and 1334–1528 (VLSL…DHYQ). The segment covering 1096–1113 (ASERLKPETQETRPREKP) has biased composition (basic and acidic residues). Low complexity predominate over residues 1365–1383 (PSAPCLAPSSLLSPEASPC). The segment at 1379–1450 (EASPCRNDMN…SSSSSSSSSS (72 aa)) is necessary for interaction with CREB1 and NRF1. The segment covering 1400 to 1409 (RSMRCYRKAC) has biased composition (basic residues). 2 positions are modified to phosphoserine: Ser-1411 and Ser-1413. Composition is skewed to low complexity over residues 1427-1459 (SRSV…RSLS) and 1468-1500 (SSCS…SSSR). Residues 1501-1519 (SRSRSPSPRRRSDRRRRYS) show a composition bias toward basic residues. Residues 1543–1619 (RVVFIGKIPG…QPFDLCFGGR (77 aa)) form the RRM domain.

As to quaternary structure, interacts with CREB1 and NRF1. Strongly expressed in heart and skeletal muscle, moderately in lung, placenta, intestine, liver, kidney, spleen, thymus, colon and brain. Also expressed in several oncocytic thyroid tumors.

The protein localises to the nucleus. Functionally, acts as a coactivator during transcriptional activation of nuclear genes related to mitochondrial biogenesis and cell growth. Involved in the transcription coactivation of CREB and NRF1 target genes. This Homo sapiens (Human) protein is Peroxisome proliferator-activated receptor gamma coactivator-related protein 1 (PPRC1).